Here is a 67-residue protein sequence, read N- to C-terminus: DNA-directed RNA polymerase subunit omega (67 aa).

It belongs to the RNA polymerase subunit omega family. In terms of assembly, the RNAP catalytic core consists of 2 alpha, 1 beta, 1 beta' and 1 omega subunit. When a sigma factor is associated with the core the holoenzyme is formed, which can initiate transcription.

The enzyme catalyses RNA(n) + a ribonucleoside 5'-triphosphate = RNA(n+1) + diphosphate. Functionally, promotes RNA polymerase assembly. Latches the N- and C-terminal regions of the beta' subunit thereby facilitating its interaction with the beta and alpha subunits. The protein is DNA-directed RNA polymerase subunit omega of Listeria monocytogenes serotype 4b (strain F2365).